We begin with the raw amino-acid sequence, 408 residues long: LIN1-like protein (408 aa).

Positions 1–161 (MKRTLRNPGN…SVPSSPKRMS (161 aa)) are disordered. The span at 41–52 (YYESESEEDEDQ) shows a compositional bias: acidic residues. 3 stretches are compositionally biased toward basic and acidic residues: residues 53-62 (ILNKEKKEGQ), 73-109 (DEKRTLPNDEAQKRRDFIENGDAERLAHKGLRNKEVL), and 119-129 (NGKYSKLRYED). The region spanning 344-402 (SSQYNFKWEFDDKTYGPYTASQIQAWSNEGYFTDAKHAAFIQLANMDEWMYPNNICFCD) is the GYF domain.

Belongs to the LIN1 family.

In Schizosaccharomyces pombe (strain 972 / ATCC 24843) (Fission yeast), this protein is LIN1-like protein.